A 100-amino-acid chain; its full sequence is Urease subunit gamma (100 aa).

The protein belongs to the urease gamma subunit family. In terms of assembly, heterotrimer of UreA (gamma), UreB (beta) and UreC (alpha) subunits. Three heterotrimers associate to form the active enzyme.

It is found in the cytoplasm. It catalyses the reaction urea + 2 H2O + H(+) = hydrogencarbonate + 2 NH4(+). The protein operates within nitrogen metabolism; urea degradation; CO(2) and NH(3) from urea (urease route): step 1/1. This is Urease subunit gamma from Burkholderia ambifaria (strain MC40-6).